An 800-amino-acid polypeptide reads, in one-letter code: Putative antiporter subunit mnhA2 (800 aa).

Helical transmembrane passes span 3–23 (LVYL…TLFI), 29–49 (FAGY…LAQI), 78–98 (GLGL…FFYA), 109–129 (LPRF…IVVS), 133–153 (ILMY…ISYW), 167–187 (FIIT…LYII), 202–222 (SISE…GAFT), 249–269 (SATM…ILGL), 273–293 (YIYI…VTAL), 300–320 (GILA…VGLG), 337–357 (LILF…CALF), 387–407 (LVMT…GFLS), 428–448 (LTII…VYAV), 472–492 (PWLF…IFFI), 527–547 (GVNL…ILAL), 596–616 (IITV…VGLP), 627–647 (GPLE…LVFI), 651–671 (LTMV…FLLM), 676–696 (LALT…VSFS), 712–732 (TIKI…IFIA), and 768–788 (LDTM…YTLL).

It belongs to the CPA3 antiporters (TC 2.A.63) subunit A family. As to quaternary structure, may form a heterooligomeric complex that consists of seven subunits: mnhA2, mnhB2, mnhC2, mnhD2, mnhE2, mnhF2 and mnhG2.

The protein resides in the cell membrane. The chain is Putative antiporter subunit mnhA2 (mnhA2) from Staphylococcus haemolyticus (strain JCSC1435).